Consider the following 134-residue polypeptide: uncharacterized protein (134 aa).

A helical membrane pass occupies residues 110–130 (SLGVLTDILFLVLYSLLIHLS).

The protein resides in the membrane. This is an uncharacterized protein from Saccharomyces cerevisiae (strain ATCC 204508 / S288c) (Baker's yeast).